The primary structure comprises 362 residues: Prostaglandin F2-alpha receptor (362 aa).

Residues 1–31 (MSTNSSIQPVSPESELLSNTTCQLEEDLSIS) are Extracellular-facing. Asn4 and Asn19 each carry an N-linked (GlcNAc...) asparagine glycan. Residues 32–54 (FSIIFMTVGILSNSLAIAILMKA) traverse the membrane as a helical segment. Residues 55 to 69 (YQRFRQKYKSSFLLL) are Cytoplasmic-facing. A helical membrane pass occupies residues 70 to 90 (ASALVITDFFGHLINGTIAVF). Over 91–109 (VYASDKDWIYFDKSNILCS) the chain is Extracellular. A disulfide bridge links Cys108 with Cys186. A helical transmembrane segment spans residues 110–131 (IFGICMVFSGLCPLFLGSLMAI). At 132–152 (ERCIGVTKPIFHSTKITTKHV) the chain is on the cytoplasmic side. Residues 153–175 (KMMLSGVCFFAVFVALLPILGHR) traverse the membrane as a helical segment. The Extracellular portion of the chain corresponds to 176 to 198 (DYKIQASRTWCFYKTDEIKDWED). Residues 199–224 (RFYLLLFAFLGLLALGISFVCNAITG) traverse the membrane as a helical segment. Topologically, residues 225–250 (ISLLKVKFRSQQHRQGRSHHFEMVIQ) are cytoplasmic. A helical membrane pass occupies residues 251–267 (LLGIMCVSCICWSPFLV). Topologically, residues 268–285 (TMASIGMNIQDFKDSCER) are extracellular. A helical transmembrane segment spans residues 286-307 (TLFTLRMATWNQILDPWVYILL). Residues 308–362 (RKAVLRNLYVCTRRCCGVHVISLHVWELSSIKDSLKVAAISDLPVTEKVTQQTST) lie on the Cytoplasmic side of the membrane.

Belongs to the G-protein coupled receptor 1 family.

It is found in the cell membrane. In terms of biological role, receptor for prostaglandin F2-alpha (PGF2-alpha). The activity of this receptor is mediated by G proteins which activate a phosphatidylinositol-calcium second messenger system. Initiates luteolysis in the corpus luteum. This chain is Prostaglandin F2-alpha receptor (PTGFR), found in Bos taurus (Bovine).